The following is a 487-amino-acid chain: Betaine aldehyde dehydrogenase (487 aa).

2 residues coordinate K(+): isoleucine 27 and aspartate 93. Residue 149–151 (GAW) participates in NAD(+) binding. The active-site Charge relay system is the lysine 161. Residues 175 to 178 (KPSE) and 228 to 231 (SVPT) contribute to the NAD(+) site. Residue leucine 243 coordinates K(+). The Proton acceptor role is filled by glutamate 249. NAD(+) is bound by residues glycine 251, cysteine 283, and glutamate 384. Cysteine 283 serves as the catalytic Nucleophile. Cysteine 283 is modified (cysteine sulfenic acid (-SOH)). K(+)-binding residues include lysine 454 and glycine 457. Glutamate 461 acts as the Charge relay system in catalysis.

The protein belongs to the aldehyde dehydrogenase family. In terms of assembly, dimer of dimers. K(+) is required as a cofactor.

It catalyses the reaction betaine aldehyde + NAD(+) + H2O = glycine betaine + NADH + 2 H(+). Its pathway is amine and polyamine biosynthesis; betaine biosynthesis via choline pathway; betaine from betaine aldehyde: step 1/1. Its function is as follows. Involved in the biosynthesis of the osmoprotectant glycine betaine. Catalyzes the irreversible oxidation of betaine aldehyde to the corresponding acid. The protein is Betaine aldehyde dehydrogenase of Brucella suis (strain ATCC 23445 / NCTC 10510).